Reading from the N-terminus, the 474-residue chain is 6-phospho-beta-galactosidase (474 aa).

D-galactose 6-phosphate-binding residues include glutamine 19, histidine 116, asparagine 159, glutamate 160, and asparagine 297. The active-site Proton donor is the glutamate 160. Glutamate 375 serves as the catalytic Nucleophile. Serine 433, tryptophan 434, lysine 440, and tyrosine 442 together coordinate D-galactose 6-phosphate.

It belongs to the glycosyl hydrolase 1 family.

It carries out the reaction a 6-phospho-beta-D-galactoside + H2O = D-galactose 6-phosphate + an alcohol. Its pathway is carbohydrate metabolism; lactose degradation; D-galactose 6-phosphate and beta-D-glucose from lactose 6-phosphate: step 1/1. The sequence is that of 6-phospho-beta-galactosidase from Lacticaseibacillus rhamnosus (Lactobacillus rhamnosus).